We begin with the raw amino-acid sequence, 292 residues long: Elongation factor Ts (292 aa).

The segment at Thr-80–Val-83 is involved in Mg(2+) ion dislocation from EF-Tu.

It belongs to the EF-Ts family.

Its subcellular location is the cytoplasm. Functionally, associates with the EF-Tu.GDP complex and induces the exchange of GDP to GTP. It remains bound to the aminoacyl-tRNA.EF-Tu.GTP complex up to the GTP hydrolysis stage on the ribosome. This Cupriavidus metallidurans (strain ATCC 43123 / DSM 2839 / NBRC 102507 / CH34) (Ralstonia metallidurans) protein is Elongation factor Ts.